A 124-amino-acid chain; its full sequence is Urease subunit beta (124 aa).

It belongs to the urease beta subunit family. Heterotrimer of UreA (gamma), UreB (beta) and UreC (alpha) subunits. Three heterotrimers associate to form the active enzyme.

It localises to the cytoplasm. It carries out the reaction urea + 2 H2O + H(+) = hydrogencarbonate + 2 NH4(+). The protein operates within nitrogen metabolism; urea degradation; CO(2) and NH(3) from urea (urease route): step 1/1. This Bacillus subtilis (strain 168) protein is Urease subunit beta.